Here is a 552-residue protein sequence, read N- to C-terminus: uncharacterized protein (552 aa).

The tract at residues 1–59 is disordered; it reads MPLEKTNTHDSTATVEDQEATDNPMHLTQSRMLDLAGNPNRTTSRQSETLFPNGVDLNY. Over residues 39 to 50 the composition is skewed to polar residues; sequence PNRTTSRQSETL. The next 12 membrane-spanning stretches (helical) occupy residues 116–136, 158–178, 181–201, 203–223, 238–258, 271–291, 345–365, 383–403, 424–444, 450–470, 484–506, and 519–539; these read ITIV…VIAG, LMVV…EMIG, IVYL…ALAP, IACL…PLTL, GLAI…GPLV, WIFW…LPVP, ILVC…GYFF, GLMF…TPFL, LVGM…FAWT, IWIG…LFYF, CASA…PLFI, and FFLL…FYLF.

It belongs to the major facilitator superfamily.

The protein localises to the membrane. This is an uncharacterized protein from Schizosaccharomyces pombe (strain 972 / ATCC 24843) (Fission yeast).